Here is a 377-residue protein sequence, read N- to C-terminus: Cyclin-I (377 aa).

Residues 357-377 (DLSRQEGHASPCPPLQPVSVM) form a disordered region. The span at 367 to 377 (PCPPLQPVSVM) shows a compositional bias: pro residues.

Belongs to the cyclin family. In terms of tissue distribution, highest levels in adult heart, brain and skeletal muscle. Lower levels in adult placenta, lung, kidney and pancreas. Also high levels in fetal brain and lower levels in fetal lung, liver and kidney. Also abundant in testis and thyroid.

It is found in the nucleus membrane. The protein is Cyclin-I of Homo sapiens (Human).